A 747-amino-acid polypeptide reads, in one-letter code: Polyribonucleotide nucleotidyltransferase (747 aa).

Mg(2+) contacts are provided by Asp502 and Asp508. Residues 569–628 (PRMLTITIDPDKIRDIIGPGGKIIKKIIEETGVEIDVEDDGRVFIASTDAAAGERALKII) enclose the KH domain. The S1 motif domain occupies 638–712 (GKVYNGKVTR…PQGRLKLSRK (75 aa)). The segment at 718–747 (STVGEGGHRHFRRAGREGGHRGLNNRRQSR) is disordered.

It belongs to the polyribonucleotide nucleotidyltransferase family. Requires Mg(2+) as cofactor.

The protein resides in the cytoplasm. It carries out the reaction RNA(n+1) + phosphate = RNA(n) + a ribonucleoside 5'-diphosphate. In terms of biological role, involved in mRNA degradation. Catalyzes the phosphorolysis of single-stranded polyribonucleotides processively in the 3'- to 5'-direction. The polypeptide is Polyribonucleotide nucleotidyltransferase (Moorella thermoacetica (strain ATCC 39073 / JCM 9320)).